The following is a 190-amino-acid chain: Holliday junction branch migration complex subunit RuvA (190 aa).

Positions 1-64 are domain I; it reads MIGRITGTLI…EDAQLLYGFG (64 aa). The segment at 65–137 is domain II; the sequence is SSAERSTFRE…MRGKLGADIG (73 aa). The flexible linker stretch occupies residues 137-141; sequence GATPH. Residues 142 to 190 are domain III; that stretch reads AASGHQSDILNALLALGYSDKESQAALKKLPDGVDVSEGIRLALKALVR.

It belongs to the RuvA family. In terms of assembly, homotetramer. Forms an RuvA(8)-RuvB(12)-Holliday junction (HJ) complex. HJ DNA is sandwiched between 2 RuvA tetramers; dsDNA enters through RuvA and exits via RuvB. An RuvB hexamer assembles on each DNA strand where it exits the tetramer. Each RuvB hexamer is contacted by two RuvA subunits (via domain III) on 2 adjacent RuvB subunits; this complex drives branch migration. In the full resolvosome a probable DNA-RuvA(4)-RuvB(12)-RuvC(2) complex forms which resolves the HJ.

It localises to the cytoplasm. In terms of biological role, the RuvA-RuvB-RuvC complex processes Holliday junction (HJ) DNA during genetic recombination and DNA repair, while the RuvA-RuvB complex plays an important role in the rescue of blocked DNA replication forks via replication fork reversal (RFR). RuvA specifically binds to HJ cruciform DNA, conferring on it an open structure. The RuvB hexamer acts as an ATP-dependent pump, pulling dsDNA into and through the RuvAB complex. HJ branch migration allows RuvC to scan DNA until it finds its consensus sequence, where it cleaves and resolves the cruciform DNA. The protein is Holliday junction branch migration complex subunit RuvA of Bordetella pertussis (strain Tohama I / ATCC BAA-589 / NCTC 13251).